The sequence spans 117 residues: Ribonuclease P protein component 4 (117 aa).

Zn(2+) contacts are provided by cysteine 64, cysteine 67, cysteine 93, and cysteine 96.

This sequence belongs to the eukaryotic/archaeal RNase P protein component 4 family. In terms of assembly, consists of a catalytic RNA component and at least 4-5 protein subunits. It depends on Zn(2+) as a cofactor.

The protein resides in the cytoplasm. The enzyme catalyses Endonucleolytic cleavage of RNA, removing 5'-extranucleotides from tRNA precursor.. Its function is as follows. Part of ribonuclease P, a protein complex that generates mature tRNA molecules by cleaving their 5'-ends. The sequence is that of Ribonuclease P protein component 4 from Pyrococcus abyssi (strain GE5 / Orsay).